The primary structure comprises 416 residues: Geranyl diphosphate synthase (416 aa).

Residues Asp157 and Asp161 each coordinate Mg(2+). A DDXXD motif motif is present at residues 157–161 (DDIMD).

This sequence belongs to the FPP/GGPP synthase family. The cofactor is Mg(2+). Specifically expressed in the anterior midgut of male beetles, the site of aggregation pheromone biosynthesis.

The catalysed reaction is isopentenyl diphosphate + dimethylallyl diphosphate = (2E)-geranyl diphosphate + diphosphate. It participates in pheromone biosynthesis. Its function is as follows. Geranyl diphosphate synthase involved in pheromone biosynthesis. In Ips pini (Pine engraver beetle), this protein is Geranyl diphosphate synthase.